A 506-amino-acid chain; its full sequence is GMP synthase [glutamine-hydrolyzing] (506 aa).

Residues 2 to 190 (SIVILDFGSQ…FLDICGVTRD (189 aa)) form the Glutamine amidotransferase type-1 domain. Cysteine 79 serves as the catalytic Nucleophile. Residues histidine 165 and glutamate 167 contribute to the active site. The 191-residue stretch at 191 to 381 (WNAEHIVDEL…LGLPDHIRMR (191 aa)) folds into the GMPS ATP-PPase domain. 219 to 225 (SGGVDSS) contacts ATP.

As to quaternary structure, homodimer.

The enzyme catalyses XMP + L-glutamine + ATP + H2O = GMP + L-glutamate + AMP + diphosphate + 2 H(+). Its pathway is purine metabolism; GMP biosynthesis; GMP from XMP (L-Gln route): step 1/1. In terms of biological role, catalyzes the synthesis of GMP from XMP. The sequence is that of GMP synthase [glutamine-hydrolyzing] (guaA) from Deinococcus radiodurans (strain ATCC 13939 / DSM 20539 / JCM 16871 / CCUG 27074 / LMG 4051 / NBRC 15346 / NCIMB 9279 / VKM B-1422 / R1).